The chain runs to 245 residues: MDKNELVQKAKLAEQAERYDDMAACMKSVTEQGAELSNEERNLLSVAYKNVVGARRSSWRVVSSIEQKTEGAEKKQQMAREYREKIETELRDICNDVLSLLEKFLIPNASQAESKVFYLKMKGDYYRYLAEVAAGDDKKGIVDQSQQAYQEAFEISKKEMQPTHPIRLGLALNFSVFYYEILNSPEKACSLAKTAFDEAIAELDTLSEESYKDSTLIMQLLRDNLTLWTSDTQGDEAEAGEGGEN.

Methionine 1 is subject to N-acetylmethionine. Lysine 3 carries the post-translational modification N6-acetyllysine. Phosphoserine; by PKA is present on serine 58. N6-acetyllysine is present on lysine 68. Residues serine 184, serine 207, and serine 210 each carry the phosphoserine modification. Threonine 232 is modified (phosphothreonine; by CK1).

It belongs to the 14-3-3 family. In terms of assembly, homodimer. Heterodimerizes with YWHAE. Homo- and heterodimerization is inhibited by phosphorylation on Ser-58. Interacts with FOXO4, NOXA1, SSH1 ARHGEF2, CDK16 and BSPRY. Interacts with WEE1 (C-terminal). Interacts with MLF1 (phosphorylated form); the interaction retains it in the cytoplasm. Interacts with BAX; the interaction occurs in the cytoplasm. Under stress conditions, MAPK8-mediated phosphorylation releases BAX to mitochondria. Interacts with TP53; the interaction enhances p53 transcriptional activity. The Ser-58 phosphorylated form inhibits this interaction and p53 transcriptional activity. Interacts with ABL1 (phosphorylated form); the interaction retains ABL1 in the cytoplasm. Interacts with PKA-phosphorylated AANAT; the interaction modulates AANAT enzymatic activity by increasing affinity for arylalkylamines and acetyl-CoA and protecting the enzyme from dephosphorylation and proteasomal degradation. It may also prevent thiol-dependent inactivation. Interacts with AKT1; the interaction phosphorylates YWHAZ and modulates dimerization. Interacts with GAB2. Interacts with BCL2L11, SAMSN1 and TLK2. Interacts with phosphorylated RAF1; the interaction is inhibited when YWHAZ is phosphorylated on Thr-232. Interacts with Thr-phosphorylated ITGB2. Interacts with the 'Thr-369' phosphorylated form of DAPK2. Interacts with PI4KB, TBC1D22A and TBC1D22B. Interacts with ZFP36L1 (via phosphorylated form); this interaction occurs in a p38 MAPK- and AKT-signaling pathways. Interacts with SLITRK1. Interacts with AK5, LDB1, MADD, MARK3, PDE1A and SMARCB1. Interacts with YWHAZ. Interacts with MEFV. Interacts with ADAM22 (via C-terminus). The delta, brain-specific form differs from the zeta form in being phosphorylated. Phosphorylation on Ser-184 by MAPK8; promotes dissociation of BAX and translocation of BAX to mitochondria. Phosphorylation on Thr-232; inhibits binding of RAF1. Phosphorylated on Ser-58 by PKA and protein kinase C delta type catalytic subunit in a sphingosine-dependent fashion. Phosphorylation on Ser-58 by PKA; disrupts homodimerization and heterodimerization with YHAE and TP53.

The protein resides in the cytoplasm. Its subcellular location is the melanosome. Functionally, adapter protein implicated in the regulation of a large spectrum of both general and specialized signaling pathways. Binds to a large number of partners, usually by recognition of a phosphoserine or phosphothreonine motif. Binding generally results in the modulation of the activity of the binding partner. Promotes cytosolic retention and inactivation of TFEB transcription factor by binding to phosphorylated TFEB. Induces ARHGEF7 activity on RAC1 as well as lamellipodia and membrane ruffle formation. In neurons, regulates spine maturation through the modulation of ARHGEF7 activity. The protein is 14-3-3 protein zeta/delta (YWHAZ) of Bos taurus (Bovine).